The sequence spans 203 residues: Glycerol-3-phosphate acyltransferase (203 aa).

The next 4 membrane-spanning stretches (helical) occupy residues 6–26 (LTLL…AVLV), 82–102 (AISL…PIFF), 118–138 (APIG…LLLI), and 141–161 (YSSL…WWLD).

Belongs to the PlsY family. Probably interacts with PlsX.

The protein resides in the cell inner membrane. The enzyme catalyses an acyl phosphate + sn-glycerol 3-phosphate = a 1-acyl-sn-glycero-3-phosphate + phosphate. Its pathway is lipid metabolism; phospholipid metabolism. Catalyzes the transfer of an acyl group from acyl-phosphate (acyl-PO(4)) to glycerol-3-phosphate (G3P) to form lysophosphatidic acid (LPA). This enzyme utilizes acyl-phosphate as fatty acyl donor, but not acyl-CoA or acyl-ACP. The protein is Glycerol-3-phosphate acyltransferase of Shewanella putrefaciens (strain CN-32 / ATCC BAA-453).